The following is a 322-amino-acid chain: Tlg2p-like protein a (322 aa).

Residues 1 to 301 lie on the Cytoplasmic side of the membrane; that stretch reads MATRNRTLLF…QRHGGMVKCA (301 aa). Residues 116–146 adopt a coiled-coil conformation; it reads KEDQHNIESLTQEITFLLKKSEKQLQRLSAS. In terms of domain architecture, t-SNARE coiled-coil homology spans 226 to 288; it reads EEVSVEREKE…EDGLKQLQKA (63 aa). A helical; Anchor for type IV membrane protein membrane pass occupies residues 302–322; the sequence is SVLVILCFIMLLLLILKEIFL.

Belongs to the syntaxin family. In terms of assembly, interacts with VTI12 and SYP61 to form a t-SNARE complex and with VPS45. Interacts with TNO1. Binds to YKT61 and YKT62. Core constituent of the SNARE complex required for membrane fusion at the trans-Golgi network. In terms of tissue distribution, mostly expressed in flowers, to a lower extent in leaves and roots, and, at low levels, in stems.

It localises to the golgi apparatus. It is found in the trans-Golgi network membrane. Functionally, contributes to the regulation of secretory and vacuolar transport pathways in the post-Golgi network, and to the maintenance of the Golgi apparatus and trans-Golgi network (TGN) morphologies. Together with VTI12, required for membrane fusion. Vesicle trafficking protein that functions in the secretory pathway and mediates liposome fusion; the fusion of phospholipid vesicles containing SYP41 and VTI12 is triggered by YKT61 and YKT62. Required for extracellular resistance responses to a fungal pathogen. Also involved in the protection of chloroplasts from salicylic acid-dependent biotic stress. The polypeptide is Tlg2p-like protein a (Arabidopsis thaliana (Mouse-ear cress)).